The primary structure comprises 367 residues: Molybdopterin synthase catalytic subunit (367 aa).

Residues 101–102 (HR), lysine 117, and 124–126 (KKE) each bind substrate.

The protein belongs to the MoaE family. MOCS2B subfamily. In terms of assembly, heterotetramer; composed of 2 small (Mocs2A) and 2 large (Mocs2B) subunits.

It localises to the cytoplasm. It carries out the reaction 2 [molybdopterin-synthase sulfur-carrier protein]-C-terminal-Gly-aminoethanethioate + cyclic pyranopterin phosphate + H2O = molybdopterin + 2 [molybdopterin-synthase sulfur-carrier protein]-C-terminal Gly-Gly + 2 H(+). It functions in the pathway cofactor biosynthesis; molybdopterin biosynthesis. Functionally, catalytic subunit of the molybdopterin synthase complex, a complex that catalyzes the conversion of precursor Z into molybdopterin. Acts by mediating the incorporation of 2 sulfur atoms from thiocarboxylated Mocs2A into precursor Z to generate a dithiolene group. This chain is Molybdopterin synthase catalytic subunit, found in Drosophila erecta (Fruit fly).